A 25-amino-acid chain; its full sequence is Arginine attenuator peptide (25 aa).

It belongs to the arginine attenuator peptide family.

Functionally, arginine attenuator peptide (AAP) that has a regulatory role in the production of arginine-specific carbamoyl phosphate synthetase. Encoded by an upstream open reading frame (uORF) within the 5'-leader region of arginine-specific carbamoyl phosphate synthetase small chain (CPA1) mRNA, it attenuates the translation of the downstream CPA1 ORF. In the presence of high concentrations of arginine, ribosomes translating the uORF encoding AAP stall at the termination codon, resulting in reduced translation from the downstream CPA1 initiation codon. The protein is Arginine attenuator peptide of Saccharomyces cerevisiae (strain ATCC 204508 / S288c) (Baker's yeast).